Here is a 155-residue protein sequence, read N- to C-terminus: Small ribosomal subunit protein uS7 (155 aa).

Belongs to the universal ribosomal protein uS7 family. As to quaternary structure, part of the 30S ribosomal subunit. Contacts proteins S9 and S11.

Its function is as follows. One of the primary rRNA binding proteins, it binds directly to 16S rRNA where it nucleates assembly of the head domain of the 30S subunit. Is located at the subunit interface close to the decoding center, probably blocks exit of the E-site tRNA. The chain is Small ribosomal subunit protein uS7 from Ureaplasma parvum serovar 3 (strain ATCC 27815 / 27 / NCTC 11736).